A 242-amino-acid chain; its full sequence is UDP-2,3-diacylglucosamine hydrolase (242 aa).

5 residues coordinate Mn(2+): Asp8, His10, Asp41, Asn79, and His114. 79–80 (NR) contributes to the substrate binding site. The substrate site is built by Asp122, Lys164, Lys167, and His195. The Mn(2+) site is built by His195 and His197.

It belongs to the LpxH family. Mn(2+) is required as a cofactor.

It is found in the cell inner membrane. It carries out the reaction UDP-2-N,3-O-bis[(3R)-3-hydroxytetradecanoyl]-alpha-D-glucosamine + H2O = 2-N,3-O-bis[(3R)-3-hydroxytetradecanoyl]-alpha-D-glucosaminyl 1-phosphate + UMP + 2 H(+). It functions in the pathway glycolipid biosynthesis; lipid IV(A) biosynthesis; lipid IV(A) from (3R)-3-hydroxytetradecanoyl-[acyl-carrier-protein] and UDP-N-acetyl-alpha-D-glucosamine: step 4/6. Functionally, hydrolyzes the pyrophosphate bond of UDP-2,3-diacylglucosamine to yield 2,3-diacylglucosamine 1-phosphate (lipid X) and UMP by catalyzing the attack of water at the alpha-P atom. Involved in the biosynthesis of lipid A, a phosphorylated glycolipid that anchors the lipopolysaccharide to the outer membrane of the cell. The sequence is that of UDP-2,3-diacylglucosamine hydrolase from Vibrio parahaemolyticus serotype O3:K6 (strain RIMD 2210633).